The primary structure comprises 261 residues: Ribosomal RNA small subunit methyltransferase J (261 aa).

Residues 111–112 (RD), 127–128 (ER), 163–164 (SS), and Asp181 each bind S-adenosyl-L-methionine.

It belongs to the methyltransferase superfamily. RsmJ family.

The protein localises to the cytoplasm. It carries out the reaction guanosine(1516) in 16S rRNA + S-adenosyl-L-methionine = N(2)-methylguanosine(1516) in 16S rRNA + S-adenosyl-L-homocysteine + H(+). Its function is as follows. Specifically methylates the guanosine in position 1516 of 16S rRNA. This is Ribosomal RNA small subunit methyltransferase J from Shewanella sp. (strain MR-7).